The sequence spans 212 residues: Redox-sensing transcriptional repressor Rex (212 aa).

The segment at residues 17 to 56 is a DNA-binding region (H-T-H motif); that stretch reads KYHRYLQELMENDIDRISSKELSEKIGFTASQIRQDLNCF. 91–96 contacts NAD(+); that stretch reads GAGNIG.

Belongs to the transcriptional regulatory Rex family. As to quaternary structure, homodimer.

It localises to the cytoplasm. Modulates transcription in response to changes in cellular NADH/NAD(+) redox state. This is Redox-sensing transcriptional repressor Rex from Clostridium perfringens (strain SM101 / Type A).